We begin with the raw amino-acid sequence, 646 residues long: Glutamine--tRNA ligase protein virJ (646 aa).

The segment at 25–65 is disordered; the sequence is NELKKRIQKRARKAAAAANRSNAQQEKGNKPAANKPAAKPE. Residues 38-61 are compositionally biased toward low complexity; sequence AAAAANRSNAQQEKGNKPAANKPA. The 'HIGH' region motif lies at 98-108; that stretch reads PEPNGYLHLGH. Residues 99 to 101 and 105 to 111 contribute to the ATP site; these read EPN and HLGHAKA. The L-glutamine site is built by Asp147 and Tyr296. Residues Thr315, 344 to 345, and 352 to 354 contribute to the ATP site; these read RL and MSK. Residues 351–355 carry the 'KMSKS' region motif; it reads IMSKR.

This sequence belongs to the class-I aminoacyl-tRNA synthetase family.

It carries out the reaction tRNA(Gln) + L-glutamine + ATP = L-glutaminyl-tRNA(Gln) + AMP + diphosphate. Functionally, glutamine--tRNA ligase; part of the gene cluster that mediates the biosynthesis of virensols and trichoxide, fungal natural products that contain or are derived from a salicylaldehyde core. VirJ does not seem to play any role in virensols and trichoxide biosynthesis. The protein is Glutamine--tRNA ligase protein virJ of Hypocrea virens (strain Gv29-8 / FGSC 10586) (Gliocladium virens).